Here is a 375-residue protein sequence, read N- to C-terminus: Chaperone protein DnaJ (375 aa).

The J domain occupies 6-71 (DYYEVLGVPK…EKRRQYDQFG (66 aa)). The CR-type zinc finger occupies 138 to 220 (GTTKKIDVTL…CYGTGYISSK (83 aa)). Positions 151, 154, 168, 171, 194, 197, 208, and 211 each coordinate Zn(2+). CXXCXGXG motif repeat units lie at residues 151–158 (CSSCHGTG), 168–175 (CSKCGGRG), 194–201 (CPDCHGTG), and 208–215 (CPDCYGTG).

It belongs to the DnaJ family. In terms of assembly, homodimer. The cofactor is Zn(2+).

The protein localises to the cytoplasm. Functionally, participates actively in the response to hyperosmotic and heat shock by preventing the aggregation of stress-denatured proteins and by disaggregating proteins, also in an autonomous, DnaK-independent fashion. Unfolded proteins bind initially to DnaJ; upon interaction with the DnaJ-bound protein, DnaK hydrolyzes its bound ATP, resulting in the formation of a stable complex. GrpE releases ADP from DnaK; ATP binding to DnaK triggers the release of the substrate protein, thus completing the reaction cycle. Several rounds of ATP-dependent interactions between DnaJ, DnaK and GrpE are required for fully efficient folding. Also involved, together with DnaK and GrpE, in the DNA replication of plasmids through activation of initiation proteins. The polypeptide is Chaperone protein DnaJ (Lachnospira eligens (strain ATCC 27750 / DSM 3376 / VPI C15-48 / C15-B4) (Eubacterium eligens)).